The primary structure comprises 339 residues: 4-dimethylallyltryptophan N-methyltransferase easF (339 aa).

This sequence belongs to the methyltransferase superfamily. Homodimer.

It catalyses the reaction 4-(3-methylbut-2-enyl)-L-tryptophan + S-adenosyl-L-methionine = 4-(3-methylbut-2-enyl)-L-abrine + S-adenosyl-L-homocysteine + H(+). It functions in the pathway alkaloid biosynthesis; ergot alkaloid biosynthesis. Functionally, 4-dimethylallyltryptophan N-methyltransferase; part of the gene cluster that mediates the biosynthesis of fumiclavanine C, a fungal ergot alkaloid. DmaW catalyzes the first step of ergot alkaloid biosynthesis by condensing dimethylallyl diphosphate (DMAP) and tryptophan to form 4-dimethylallyl-L-tryptophan. The second step is catalyzed by the methyltransferase easF that methylates 4-dimethylallyl-L-tryptophan in the presence of S-adenosyl-L-methionine, resulting in the formation of 4-dimethylallyl-L-abrine. The catalase easC and the FAD-dependent oxidoreductase easE then transform 4-dimethylallyl-L-abrine to chanoclavine-I which is further oxidized by EasD in the presence of NAD(+), resulting in the formation of chanoclavine-I aldehyde. EasA reduces chanoclavine-I aldehyde to dihydrochanoclavine-I aldehyde that spontaneously dehydrates to form 6,8-dimethyl-6,7-didehydroergoline. EasG then catalyzes the reduction of 6,8-dimethyl-6,7-didehydroergoline to form festuclavine. Hydrolysis of festuclavine by easM then leads to the formation of fumigaclavine B which is in turn acetylated by easN to fumigaclavine A. Finally, easL catalyzes the conversion of fumigaclavine A into fumigaclavine C by attaching a dimethylallyl moiety to C-2 of the indole nucleus. This chain is 4-dimethylallyltryptophan N-methyltransferase easF, found in Aspergillus fumigatus (strain ATCC MYA-4609 / CBS 101355 / FGSC A1100 / Af293) (Neosartorya fumigata).